The primary structure comprises 172 residues: Female-specific lacrimal gland protein (172 aa).

The N-terminal stretch at Met-1 to Ala-16 is a signal peptide. Intrachain disulfides connect Cys-60-Cys-64 and Cys-79-Cys-170.

This sequence belongs to the calycin superfamily. Lipocalin family. As to expression, expressed in the lacrimal gland from where it is secreted into tears (at protein level).

It is found in the secreted. The polypeptide is Female-specific lacrimal gland protein (Mesocricetus auratus (Golden hamster)).